Here is a 269-residue protein sequence, read N- to C-terminus: Tryptophan synthase alpha chain (269 aa).

Residues Glu49 and Asp60 each act as proton acceptor in the active site.

It belongs to the TrpA family. In terms of assembly, tetramer of two alpha and two beta chains.

The catalysed reaction is (1S,2R)-1-C-(indol-3-yl)glycerol 3-phosphate + L-serine = D-glyceraldehyde 3-phosphate + L-tryptophan + H2O. Its pathway is amino-acid biosynthesis; L-tryptophan biosynthesis; L-tryptophan from chorismate: step 5/5. Its function is as follows. The alpha subunit is responsible for the aldol cleavage of indoleglycerol phosphate to indole and glyceraldehyde 3-phosphate. The chain is Tryptophan synthase alpha chain from Stutzerimonas stutzeri (strain A1501) (Pseudomonas stutzeri).